The following is a 312-amino-acid chain: Cytochrome c biogenesis protein CcsA (312 aa).

8 helical membrane passes run 18 to 38 (LGIL…LALF), 48 to 68 (FFTI…WILS), 73 to 93 (ISNL…GQLL), 102 to 122 (IIPV…CFVL), 148 to 168 (VMLS…VLFI), 216 to 236 (SILV…IWAN), 250 to 267 (TWAF…HMRI), and 279 to 299 (FATS…FLGI).

Belongs to the CcmF/CycK/Ccl1/NrfE/CcsA family. In terms of assembly, may interact with ccs1.

Its subcellular location is the cellular thylakoid membrane. Functionally, required during biogenesis of c-type cytochromes (cytochrome c6 and cytochrome f) at the step of heme attachment. In Prochlorococcus marinus (strain MIT 9515), this protein is Cytochrome c biogenesis protein CcsA.